Consider the following 73-residue polypeptide: MRKLLVSFLCACIIFYQKAISPHFPPSCRYEPTCSQYAIESIKKYGPFKGAGMALLRILRCNPLCKGGYDPVP.

It belongs to the UPF0161 family.

It is found in the cell inner membrane. Could be involved in insertion of integral membrane proteins into the membrane. The chain is Putative membrane protein insertion efficiency factor from Treponema denticola (strain ATCC 35405 / DSM 14222 / CIP 103919 / JCM 8153 / KCTC 15104).